The primary structure comprises 201 residues: MMQDVSSSPVSPADDSLSNSEEEPDRQQPPSGKRGGRKRRSSRRSAGGGAGPGGAAGGGVGGGDEPGSPAQGKRGKKSAGCGGGGGGGAGGGGSSSGGGSPQSYEELQTQRVMANVRERQRTQSLNEAFAALPKIIPTLPSDKLSKIQTLKLAARYIDFLYQVLQSDELDSKMASYVAHERLSYAFSVWRMEGAWSMSASH.

The span at Met1–Ser18 shows a compositional bias: low complexity. A disordered region spans residues Met1–Glu106. Positions Arg34–Arg43 are enriched in basic residues. Gly residues-rich tracts occupy residues Ala46–Glu65 and Gly80–Ser100. In terms of domain architecture, bHLH spans Thr109–Leu160. The segment at Gln162–Arg190 is sufficient for transactivation activity.

In terms of assembly, efficient DNA binding requires dimerization with another bHLH protein. Homodimer or heterodimer with E proteins such as TCF3. ID1 binds preferentially to TCF3 but does not interact efficiently with TWIST1 so ID1 levels control the amount of TCF3 available to dimerize with TWIST and thus determine the type of dimer formed.

The protein resides in the nucleus. Its function is as follows. Acts as a transcriptional regulator. Inhibits myogenesis by sequestrating E proteins, inhibiting trans-activation by MEF2, and inhibiting DNA-binding by MYOD1 through physical interaction. This interaction probably involves the basic domains of both proteins. Also represses expression of pro-inflammatory cytokines such as TNFA and IL1B. Regulates cranial suture patterning and fusion. Activates transcription as a heterodimer with E proteins. Regulates gene expression differentially, depending on dimer composition. Homodimers induce expression of FGFR2 and POSTN while heterodimers repress FGFR2 and POSTN expression and induce THBS1 expression. Heterodimerization is also required for osteoblast differentiation. Represses the activity of the circadian transcriptional activator: NPAS2-BMAL1 heterodimer. In Pan troglodytes (Chimpanzee), this protein is Twist-related protein 1 (TWIST1).